The following is a 326-amino-acid chain: Type II methyltransferase M.EcoRI (326 aa).

It belongs to the N(4)/N(6)-methyltransferase family. In terms of assembly, monomer.

The enzyme catalyses a 2'-deoxyadenosine in DNA + S-adenosyl-L-methionine = an N(6)-methyl-2'-deoxyadenosine in DNA + S-adenosyl-L-homocysteine + H(+). Functionally, a methylase that recognizes the double-stranded sequence 5'-GAATTC-3', methylates A-3 on both strands, and protects the DNA from cleavage by the EcoRI endonuclease. The protein is Type II methyltransferase M.EcoRI (ecoRIM) of Escherichia coli.